The following is a 127-amino-acid chain: uncharacterized protein (127 aa).

A signal peptide spans 1–26; the sequence is MKAIYALLAVVALALVAVSLFSQSDS.

This is an uncharacterized protein from Archaeoglobus fulgidus (strain ATCC 49558 / DSM 4304 / JCM 9628 / NBRC 100126 / VC-16).